A 243-amino-acid polypeptide reads, in one-letter code: Probable 2-phosphosulfolactate phosphatase (243 aa).

Belongs to the ComB family. Mg(2+) is required as a cofactor.

The catalysed reaction is (2R)-O-phospho-3-sulfolactate + H2O = (2R)-3-sulfolactate + phosphate. The protein is Probable 2-phosphosulfolactate phosphatase of Synechococcus sp. (strain CC9605).